The following is a 212-amino-acid chain: Phosphatidylserine decarboxylase proenzyme (212 aa).

The Schiff-base intermediate with substrate; via pyruvic acid role is filled by S182. Position 182 is a pyruvic acid (Ser); by autocatalysis (S182).

This sequence belongs to the phosphatidylserine decarboxylase family. PSD-A subfamily. In terms of assembly, heterodimer of a large membrane-associated beta subunit and a small pyruvoyl-containing alpha subunit. Pyruvate is required as a cofactor. Is synthesized initially as an inactive proenzyme. Formation of the active enzyme involves a self-maturation process in which the active site pyruvoyl group is generated from an internal serine residue via an autocatalytic post-translational modification. Two non-identical subunits are generated from the proenzyme in this reaction, and the pyruvate is formed at the N-terminus of the alpha chain, which is derived from the carboxyl end of the proenzyme. The post-translation cleavage follows an unusual pathway, termed non-hydrolytic serinolysis, in which the side chain hydroxyl group of the serine supplies its oxygen atom to form the C-terminus of the beta chain, while the remainder of the serine residue undergoes an oxidative deamination to produce ammonia and the pyruvoyl prosthetic group on the alpha chain.

The protein resides in the cell membrane. The enzyme catalyses a 1,2-diacyl-sn-glycero-3-phospho-L-serine + H(+) = a 1,2-diacyl-sn-glycero-3-phosphoethanolamine + CO2. It participates in phospholipid metabolism; phosphatidylethanolamine biosynthesis; phosphatidylethanolamine from CDP-diacylglycerol: step 2/2. Catalyzes the formation of phosphatidylethanolamine (PtdEtn) from phosphatidylserine (PtdSer). This is Phosphatidylserine decarboxylase proenzyme from Chlorobium phaeobacteroides (strain DSM 266 / SMG 266 / 2430).